The primary structure comprises 161 residues: Cyclic pyranopterin monophosphate synthase (161 aa).

Substrate is bound by residues 73 to 75 (LCH) and 110 to 111 (ME). The active site involves aspartate 125.

It belongs to the MoaC family. Homohexamer; trimer of dimers.

The enzyme catalyses (8S)-3',8-cyclo-7,8-dihydroguanosine 5'-triphosphate = cyclic pyranopterin phosphate + diphosphate. The protein operates within cofactor biosynthesis; molybdopterin biosynthesis. Catalyzes the conversion of (8S)-3',8-cyclo-7,8-dihydroguanosine 5'-triphosphate to cyclic pyranopterin monophosphate (cPMP). This Pseudomonas syringae pv. syringae (strain B728a) protein is Cyclic pyranopterin monophosphate synthase.